A 78-amino-acid polypeptide reads, in one-letter code: RNA-binding protein Hfq (78 aa).

The 60-residue stretch at 10–69 (DPFLNALRKEHVPVSIYLVNGIKLQGHIESFDQYVVLLRNTVTQMVYKHAISTVVPARAV) folds into the Sm domain.

Belongs to the Hfq family. As to quaternary structure, homohexamer.

RNA chaperone that binds small regulatory RNA (sRNAs) and mRNAs to facilitate mRNA translational regulation in response to envelope stress, environmental stress and changes in metabolite concentrations. Also binds with high specificity to tRNAs. This is RNA-binding protein Hfq from Janthinobacterium sp. (strain Marseille) (Minibacterium massiliensis).